Consider the following 327-residue polypeptide: Movement protein (327 aa).

A coiled-coil region spans residues 297–327 (SASSSNTENELARVSQNIDLLKNKLKEICGE).

The protein belongs to the caulimoviridae movement protein family. Homotrimer, through the coiled-coil domain. Interacts with VAP. May interact (via N-terminus) with host prenylated Rab acceptor protein 1D (PRA1D).

The protein resides in the host cell junction. It localises to the host plasmodesma. Its function is as follows. Transports viral genome to neighboring plant cells directly through plasmosdesmata, without any budding. The movement protein allows efficient cell to cell propagation, by bypassing the host cell wall barrier. Acts by forming tubules structures that increase the size exclusion limit (SEL) of plasmodesmata, thereby allowing viral ribonucleocapsids to spread directly to neighboring cells. The sequence is that of Movement protein from Arabidopsis thaliana (Mouse-ear cress).